A 546-amino-acid chain; its full sequence is MSDSITIFDTTLRDGEQAPGASMTVPEKVHIAHKLADLNVDVIEAGFPISSPAQTEAVTRIATEVDGPVTCALARTKEDDIDAAGEALADGTDTRLHTFIATSDVHIEAKFDKLGNTMAEKREAIIQRAVRAIEQALTYTDNVEFSAEDAGRTDPEFLCEVVQAAAEAGATTINIPDTTGYCAPSEYTDLLETVVDCLPDPDAVTLSTHCHDDLGLATANTLAGIRAGARQVECTINGIGERAGNAALEEIVMALTVRADAFDVTADVHTEHLTPTSQTVSAATGFPVQPNKAIVGSNAFSHEAGIHQHGVLEERTTYEIMSATDVGQDAEQIRLGRHSGRHGLFNRLEAMGYAVPEGHRDALYDRFLDLADRKKEVFEEDLEQMMNDFGGDAVAAATGLPDNGVALNGGTPAYRLDQFSVHLSSDDEAKVSVRLQRDDGSAREEQATGEGPVDALYRALDHAVDAPHTLVDYSIRSISEGADAQGEVEVTIRYGENQFAGTARNTDVIRASAEAYVDALNRLVAAQEHAESVEFVQNGIMHTYGE.

The 270-residue stretch at 5 to 274 folds into the Pyruvate carboxyltransferase domain; that stretch reads ITIFDTTLRD…TADVHTEHLT (270 aa). Positions 14, 209, 211, and 245 each coordinate Mn(2+). Residues 415 to 546 form a regulatory domain region; sequence RLDQFSVHLS…QNGIMHTYGE (132 aa).

Belongs to the alpha-IPM synthase/homocitrate synthase family. LeuA type 1 subfamily. Homodimer. Requires Mn(2+) as cofactor.

It is found in the cytoplasm. It catalyses the reaction 3-methyl-2-oxobutanoate + acetyl-CoA + H2O = (2S)-2-isopropylmalate + CoA + H(+). The protein operates within amino-acid biosynthesis; L-leucine biosynthesis; L-leucine from 3-methyl-2-oxobutanoate: step 1/4. Its function is as follows. Catalyzes the condensation of the acetyl group of acetyl-CoA with 3-methyl-2-oxobutanoate (2-ketoisovalerate) to form 3-carboxy-3-hydroxy-4-methylpentanoate (2-isopropylmalate). The chain is 2-isopropylmalate synthase from Salinibacter ruber (strain M8).